We begin with the raw amino-acid sequence, 337 residues long: Holliday junction branch migration complex subunit RuvB (337 aa).

The tract at residues 1-179 (MTHQVSVLHQ…FSFTGRVAYY (179 aa)) is large ATPase domain (RuvB-L). Residues leucine 18, arginine 19, glycine 60, lysine 63, threonine 64, serine 65, 126–128 (EDY), arginine 169, tyrosine 179, and arginine 216 each bind ATP. A Mg(2+)-binding site is contributed by threonine 64. Positions 180–250 (SDEDLATILR…VAEKALAMLL (71 aa)) are small ATPAse domain (RuvB-S). The segment at 253 to 337 (EWGLNEIDIK…DNLQSLGEEK (85 aa)) is head domain (RuvB-H). Residues lysine 308 and arginine 313 each coordinate DNA.

This sequence belongs to the RuvB family. As to quaternary structure, homohexamer. Forms an RuvA(8)-RuvB(12)-Holliday junction (HJ) complex. HJ DNA is sandwiched between 2 RuvA tetramers; dsDNA enters through RuvA and exits via RuvB. An RuvB hexamer assembles on each DNA strand where it exits the tetramer. Each RuvB hexamer is contacted by two RuvA subunits (via domain III) on 2 adjacent RuvB subunits; this complex drives branch migration. In the full resolvosome a probable DNA-RuvA(4)-RuvB(12)-RuvC(2) complex forms which resolves the HJ.

Its subcellular location is the cytoplasm. It carries out the reaction ATP + H2O = ADP + phosphate + H(+). Its function is as follows. The RuvA-RuvB-RuvC complex processes Holliday junction (HJ) DNA during genetic recombination and DNA repair, while the RuvA-RuvB complex plays an important role in the rescue of blocked DNA replication forks via replication fork reversal (RFR). RuvA specifically binds to HJ cruciform DNA, conferring on it an open structure. The RuvB hexamer acts as an ATP-dependent pump, pulling dsDNA into and through the RuvAB complex. RuvB forms 2 homohexamers on either side of HJ DNA bound by 1 or 2 RuvA tetramers; 4 subunits per hexamer contact DNA at a time. Coordinated motions by a converter formed by DNA-disengaged RuvB subunits stimulates ATP hydrolysis and nucleotide exchange. Immobilization of the converter enables RuvB to convert the ATP-contained energy into a lever motion, pulling 2 nucleotides of DNA out of the RuvA tetramer per ATP hydrolyzed, thus driving DNA branch migration. The RuvB motors rotate together with the DNA substrate, which together with the progressing nucleotide cycle form the mechanistic basis for DNA recombination by continuous HJ branch migration. Branch migration allows RuvC to scan DNA until it finds its consensus sequence, where it cleaves and resolves cruciform DNA. This Chlamydia abortus (strain DSM 27085 / S26/3) (Chlamydophila abortus) protein is Holliday junction branch migration complex subunit RuvB.